Consider the following 686-residue polypeptide: Rhophilin-2 (686 aa).

The REM-1 domain occupies 26–100 (NPLAQTGRSK…LEGLNISVGV (75 aa)). The tract at residues 46–66 (QILKAMRMRTGAENLLKAATN) is interaction with Rho. One can recognise a BRO1 domain in the interval 111 to 460 (PLIPLGLKET…QLKYTQLRED (350 aa)). The PDZ domain occupies 515 to 593 (RSIHFTAEEG…DDIEMKVVSL (79 aa)). Phosphothreonine is present on Thr655.

Belongs to the RHPN family. As to quaternary structure, interacts with GTP-bound RhoA and RhoB. Interacts with both GTP- and GDP-bound RhoA. Interacts with KRT18.

It is found in the cytoplasm. It localises to the perinuclear region. Functionally, binds specifically to GTP-Rho. May function in a Rho pathway to limit stress fiber formation and/or increase the turnover of F-actin structures in the absence of high levels of RhoA activity. The polypeptide is Rhophilin-2 (RHPN2) (Bos taurus (Bovine)).